The following is a 451-amino-acid chain: Glycine--tRNA ligase (451 aa).

Substrate contacts are provided by Arg101 and Glu151. Residues 183–185 (RNE), 193–198 (FRTCEF), 267–268 (EL), and 312–315 (GLTR) each bind ATP. Residue 198 to 202 (FEQME) participates in substrate binding. 308-312 (ETSAG) lines the substrate pocket.

Belongs to the class-II aminoacyl-tRNA synthetase family. Homodimer.

It is found in the cytoplasm. The enzyme catalyses tRNA(Gly) + glycine + ATP = glycyl-tRNA(Gly) + AMP + diphosphate. Its function is as follows. Catalyzes the attachment of glycine to tRNA(Gly). In Treponema denticola (strain ATCC 35405 / DSM 14222 / CIP 103919 / JCM 8153 / KCTC 15104), this protein is Glycine--tRNA ligase.